The sequence spans 116 residues: Protein Rev (116 aa).

Phosphoserine; by host CK2 occurs at positions 5 and 8. Positions 18-26 are homomultimerization; that stretch reads LIKFLYQSN. A disordered region spans residues 23-49; it reads YQSNPPPNPEGTRQARRNRRRRWRERQ. Positions 34 to 50 match the Nuclear localization signal and RNA-binding (RRE) motif; it reads TRQARRNRRRRWRERQR. Residues 36–47 show a composition bias toward basic residues; that stretch reads QARRNRRRRWRE. The Nuclear export signal and binding to XPO1 signature appears at 73–84; sequence LQLPPLERLTLD. Phosphoserine; by host occurs at positions 92 and 99. Residues 92–116 are disordered; the sequence is SGTQGVGSPQILVESPTVLESGTKE.

Belongs to the HIV-1 REV protein family. Homomultimer; when bound to the RRE. Multimeric assembly is essential for activity and may involve XPO1. Binds to human KPNB1, XPO1, TNPO1, RANBP5 and IPO7. Interacts with the viral Integrase. Interacts with human KHDRBS1. Interacts with human NAP1; this interaction decreases Rev multimerization and stimulates its activity. Interacts with human DEAD-box helicases DDX3 and DDX24; these interactions may serve for viral RNA export to the cytoplasm and packaging, respectively. Interacts with human PSIP1; this interaction may inhibit HIV-1 DNA integration by promoting dissociation of the Integrase-LEDGF/p75 complex. Post-translationally, asymmetrically arginine dimethylated at one site by host PRMT6. Methylation impairs the RNA-binding activity and export of viral RNA from the nucleus to the cytoplasm. Phosphorylated by protein kinase CK2. Presence of, and maybe binding to the N-terminus of the regulatory beta subunit of CK2 is necessary for CK2-mediated Rev's phosphorylation.

The protein localises to the host nucleus. Its subcellular location is the host nucleolus. The protein resides in the host cytoplasm. In terms of biological role, escorts unspliced or incompletely spliced viral pre-mRNAs (late transcripts) out of the nucleus of infected cells. These pre-mRNAs carry a recognition sequence called Rev responsive element (RRE) located in the env gene, that is not present in fully spliced viral mRNAs (early transcripts). This function is essential since most viral proteins are translated from unspliced or partially spliced pre-mRNAs which cannot exit the nucleus by the pathway used by fully processed cellular mRNAs. Rev itself is translated from a fully spliced mRNA that readily exits the nucleus. Rev's nuclear localization signal (NLS) binds directly to KPNB1/Importin beta-1 without previous binding to KPNA1/Importin alpha-1. KPNB1 binds to the GDP bound form of RAN (Ran-GDP) and targets Rev to the nucleus. In the nucleus, the conversion from Ran-GDP to Ran-GTP dissociates Rev from KPNB1 and allows Rev's binding to the RRE in viral pre-mRNAs. Rev multimerization on the RRE via cooperative assembly exposes its nuclear export signal (NES) to the surface. Rev can then form a complex with XPO1/CRM1 and Ran-GTP, leading to nuclear export of the complex. Conversion from Ran-GTP to Ran-GDP mediates dissociation of the Rev/RRE/XPO1/RAN complex, so that Rev can return to the nucleus for a subsequent round of export. Beside KPNB1, also seems to interact with TNPO1/Transportin-1, RANBP5/IPO5 and IPO7/RANBP7 for nuclear import. The nucleoporin-like HRB/RIP is an essential cofactor that probably indirectly interacts with Rev to release HIV RNAs from the perinuclear region to the cytoplasm. In Human immunodeficiency virus type 1 group M subtype B (isolate BRU/LAI) (HIV-1), this protein is Protein Rev.